The primary structure comprises 420 residues: Protein disulfide isomerase CRELD1 (420 aa).

A signal peptide spans 1 to 29 (MAPWPPKGLVPAMLWGLSLFLNLPGPIWL). Over 30-362 (QPSPPPQSSP…GFFSEMTEDE (333 aa)) the chain is Extracellular. The short motif at 46-49 (CHTC) is the CXXC element. A disulfide bond links Cys46 and Cys49. N-linked (GlcNAc...) asparagine glycosylation is present at Asn79. Residues 153-193 (LPCPGGTERPCGGYGQCEGEGTRGGSGHCDCQAGYGGEACG) form the EGF-like 1 domain. 3 cysteine pairs are disulfide-bonded: Cys155–Cys169, Cys163–Cys181, and Cys183–Cys192. Residue Asn205 is glycosylated (N-linked (GlcNAc...) asparagine). FU repeat units lie at residues 208 to 256 (HLVC…GANC) and 268 to 315 (SYEC…EVCP). The CXXC motif lies at 278–281 (CLGC). 4 disulfides stabilise this stretch: Cys278–Cys281, Cys309–Cys321, Cys314–Cys330, and Cys332–Cys343. One can recognise an EGF-like 2; calcium-binding domain in the interval 305–344 (DVDECETEVCPGENKQCENTEGGYRCICAEGYKQMEGICV). Residues 363–383 (LVVLQQMFFGIIICALATLAA) traverse the membrane as a helical segment. Lys384 is a topological domain (cytoplasmic). The helical transmembrane segment at 385-405 (GDLVFTAIFIGAVAAMTGYWL) threads the bilayer. Residues 406–420 (SERSDRVLEGFIKGR) lie on the Extracellular side of the membrane.

This sequence belongs to the CRELD family. In terms of tissue distribution, highly expressed in fetal lung, liver, kidney, adult heart, brain and skeletal muscle. Weakly expressed in placenta, fetal brain, and adult lung, liver, kidney and pancreas.

The protein localises to the membrane. The catalysed reaction is Catalyzes the rearrangement of -S-S- bonds in proteins.. Functionally, protein disulfide isomerase. Promotes the localization of acetylcholine receptors (AChRs) to the plasma membrane. The protein is Protein disulfide isomerase CRELD1 (CRELD1) of Homo sapiens (Human).